The chain runs to 635 residues: MVSIRLPDGSVRQYEHPVTVAEVAASIGPGLAKAALGGKIDGELVDTSALIDHDVALAIVTEKDADGLDIIRHSTAHLLAYAVKDLYPEAQVTIGPVIDNGFYYDFAYNRPFTPEDLEKIEKRMQELAKKDEPVSRRVVSRDEAVDYFKSIGEKYKAEIIESIPATDEIKLYSHGGFTDLCRGPHVPSTGKLKVFKLMKVAGAYWRGDSKNEQLQRIYGTAWTKKEDQEAYLHMLEEAEKRDHRKLGKQLDLFHMQDESPGMVFWHPRGWTLWQQVEQYMRRRVNDAGYLEIKTPMIMDRSLWEASGHWQNYRENMFTTESEKRDYAIKPMNCPGHVQVFNHGLRSYRDLPLRYAEFGSCHRNESSGALHGLMRVRGFVQDDAHIFCTEDQFISESIAFNTLAMSVYKDFGFDHVEIKLSLRPDARAGTDETWDRAEQGLREALTACGVTWEELPGEGAFYGPKVEYHIKDALGRSWQCGTLQLDMVLPERLGAEYVAEDNSRRRPIMLHRAIVGSMERFLGILIEHHAGAMPAWLAPMQVVVMNIAESQTEYAQSLAQSLQKQGVRVAADLRNEKISYKIREHTLEKVPYLLVVGDKEREAQTVAVRARGGVDLGVMPLDTFIERLRQDVQSFN.

Residues 1 to 61 (MVSIRLPDGS…DHDVALAIVT (61 aa)) enclose the TGS domain. A catalytic region spans residues 242 to 533 (DHRKLGKQLD…LIEHHAGAMP (292 aa)). 3 residues coordinate Zn(2+): Cys333, His384, and His510.

The protein belongs to the class-II aminoacyl-tRNA synthetase family. In terms of assembly, homodimer. It depends on Zn(2+) as a cofactor.

It is found in the cytoplasm. The enzyme catalyses tRNA(Thr) + L-threonine + ATP = L-threonyl-tRNA(Thr) + AMP + diphosphate + H(+). Catalyzes the attachment of threonine to tRNA(Thr) in a two-step reaction: L-threonine is first activated by ATP to form Thr-AMP and then transferred to the acceptor end of tRNA(Thr). Also edits incorrectly charged L-seryl-tRNA(Thr). This chain is Threonine--tRNA ligase, found in Paraburkholderia xenovorans (strain LB400).